A 131-amino-acid chain; its full sequence is Small ribosomal subunit protein uS8 (131 aa).

This sequence belongs to the universal ribosomal protein uS8 family. As to quaternary structure, part of the 30S ribosomal subunit. Contacts proteins S5 and S12.

One of the primary rRNA binding proteins, it binds directly to 16S rRNA central domain where it helps coordinate assembly of the platform of the 30S subunit. In Acholeplasma laidlawii (strain PG-8A), this protein is Small ribosomal subunit protein uS8.